A 289-amino-acid chain; its full sequence is 33 kDa chaperonin (289 aa).

Cystine bridges form between C235/C237 and C268/C271.

Belongs to the HSP33 family. Under oxidizing conditions two disulfide bonds are formed involving the reactive cysteines. Under reducing conditions zinc is bound to the reactive cysteines and the protein is inactive.

The protein localises to the cytoplasm. Redox regulated molecular chaperone. Protects both thermally unfolding and oxidatively damaged proteins from irreversible aggregation. Plays an important role in the bacterial defense system toward oxidative stress. The chain is 33 kDa chaperonin from Bacillus licheniformis (strain ATCC 14580 / DSM 13 / JCM 2505 / CCUG 7422 / NBRC 12200 / NCIMB 9375 / NCTC 10341 / NRRL NRS-1264 / Gibson 46).